A 556-amino-acid chain; its full sequence is Methyltransferase/ribosomally synthesized type II borosin cyclic peptide precursor pgiMA1 (556 aa).

Positions 1 to 250 are methyltransferase domain; that stretch reads MSSASSDSNT…SCSTLYVPPL (250 aa). Residues arginine 74, tyrosine 78, and tyrosine 100 contribute to the active site. S-adenosyl-L-methionine contacts are provided by tyrosine 100, histidine 102, valine 105, glutamine 174, glycine 212, serine 243, and threonine 244. The clasp domain stretch occupies residues 251-377; it reads THANKFSGNM…GAVFGVMKLR (127 aa). Residues 378-386 form a precursor leader region; that stretch reads ASEVANEQG. Residues aspartate 421, aspartate 434, aspartate 447, aspartate 460, aspartate 473, aspartate 486, aspartate 499, aspartate 512, aspartate 525, and aspartate 538 each carry the N-methylaspartate modification. Residues 543–556 constitute a propeptide that is removed on maturation; the sequence is AVPVPDHVAGIPCM.

The protein in the N-terminal section; belongs to the precorrin methyltransferase family. In terms of assembly, homodimer. PgiMA1 automethylates at Asp-421, Asp-434, Asp-447, Asp-460, Asp-473, Asp-486, Asp-499, Asp-512, Asp-525 and Asp-538 before being processed, probably by the M64 family peptidase found in the genes surrounding PgiMA1, to release methylated peptides which then undergos macrocyclization with the N-terminus of the modified core peptides. Peptide backbone alpha-N-methylations change the physicochemical properties of amide bonds to provide structural constraints and other favorable characteristics including biological membrane permeability to peptides.

It participates in secondary metabolite biosynthesis. In terms of biological role, fusion protein of the methyltransferase pgiM1 and 12 type II borosin core peptides; part of the gene cluster that mediates the biosynthesis of a type II borosin, a highly methylated cyclic peptide with potent biological activities. Type II borosins derive from the C-terminus of the fusion protein, and it is the same protein that methylates its own C-terminus using S-adenosyl methionine (SAM). The C-terminus is subsequently cleaved off and macrocyclized by a prolyloligopeptidase to give the final product. This is Methyltransferase/ribosomally synthesized type II borosin cyclic peptide precursor pgiMA1 from Phlebiopsis gigantea (strain 11061_1 CR5-6) (White-rot fungus).